The primary structure comprises 186 residues: Elongation factor P (186 aa).

This sequence belongs to the elongation factor P family.

It is found in the cytoplasm. Its pathway is protein biosynthesis; polypeptide chain elongation. In terms of biological role, involved in peptide bond synthesis. Stimulates efficient translation and peptide-bond synthesis on native or reconstituted 70S ribosomes in vitro. Probably functions indirectly by altering the affinity of the ribosome for aminoacyl-tRNA, thus increasing their reactivity as acceptors for peptidyl transferase. In Shewanella sp. (strain W3-18-1), this protein is Elongation factor P.